Here is a 568-residue protein sequence, read N- to C-terminus: Urease subunit alpha (568 aa).

Positions 131–568 (GGIDTHIHFI…LPMAQRYFLF (438 aa)) constitute a Urease domain. Residues H136, H138, and K219 each coordinate Ni(2+). Residue K219 is modified to N6-carboxylysine. H221 is a substrate binding site. Residues H248 and H274 each coordinate Ni(2+). H322 (proton donor) is an active-site residue. A Ni(2+)-binding site is contributed by D362.

Belongs to the metallo-dependent hydrolases superfamily. Urease alpha subunit family. Heterotrimer of UreA (gamma), UreB (beta) and UreC (alpha) subunits. Three heterotrimers associate to form the active enzyme. Ni cation is required as a cofactor. Carboxylation allows a single lysine to coordinate two nickel ions.

It localises to the cytoplasm. It catalyses the reaction urea + 2 H2O + H(+) = hydrogencarbonate + 2 NH4(+). It participates in nitrogen metabolism; urea degradation; CO(2) and NH(3) from urea (urease route): step 1/1. The sequence is that of Urease subunit alpha from Trichormus variabilis (strain ATCC 29413 / PCC 7937) (Anabaena variabilis).